Here is a 403-residue protein sequence, read N- to C-terminus: Glutamyl-tRNA reductase 2 (403 aa).

Substrate-binding positions include threonine 47–arginine 50, serine 98, glutamate 103–aspartate 105, and glutamine 109. The active-site Nucleophile is the cysteine 48. Glycine 177–glycine 182 is a binding site for NADP(+).

This sequence belongs to the glutamyl-tRNA reductase family. Homodimer.

The catalysed reaction is (S)-4-amino-5-oxopentanoate + tRNA(Glu) + NADP(+) = L-glutamyl-tRNA(Glu) + NADPH + H(+). Its pathway is porphyrin-containing compound metabolism; protoporphyrin-IX biosynthesis; 5-aminolevulinate from L-glutamyl-tRNA(Glu): step 1/2. In terms of biological role, catalyzes the NADPH-dependent reduction of glutamyl-tRNA(Glu) to glutamate 1-semialdehyde (GSA). The polypeptide is Glutamyl-tRNA reductase 2 (Pyrobaculum arsenaticum (strain DSM 13514 / JCM 11321 / PZ6)).